A 324-amino-acid chain; its full sequence is Acetyl-coenzyme A carboxylase carboxyl transferase subunit alpha (324 aa).

Positions 41-291 constitute a CoA carboxyltransferase C-terminal domain; sequence RLDRLKEKIY…QEYVLQEWLK (251 aa).

It belongs to the AccA family. In terms of assembly, acetyl-CoA carboxylase is a heterohexamer composed of biotin carboxyl carrier protein (AccB), biotin carboxylase (AccC) and two subunits each of ACCase subunit alpha (AccA) and ACCase subunit beta (AccD).

It localises to the cytoplasm. It carries out the reaction N(6)-carboxybiotinyl-L-lysyl-[protein] + acetyl-CoA = N(6)-biotinyl-L-lysyl-[protein] + malonyl-CoA. It functions in the pathway lipid metabolism; malonyl-CoA biosynthesis; malonyl-CoA from acetyl-CoA: step 1/1. Functionally, component of the acetyl coenzyme A carboxylase (ACC) complex. First, biotin carboxylase catalyzes the carboxylation of biotin on its carrier protein (BCCP) and then the CO(2) group is transferred by the carboxyltransferase to acetyl-CoA to form malonyl-CoA. The polypeptide is Acetyl-coenzyme A carboxylase carboxyl transferase subunit alpha (Chlamydia muridarum (strain MoPn / Nigg)).